Here is a 738-residue protein sequence, read N- to C-terminus: 1,4-alpha-glucan branching enzyme GlgB (738 aa).

D399 serves as the catalytic Nucleophile. E452 (proton donor) is an active-site residue.

It belongs to the glycosyl hydrolase 13 family. GlgB subfamily. As to quaternary structure, monomer.

It catalyses the reaction Transfers a segment of a (1-&gt;4)-alpha-D-glucan chain to a primary hydroxy group in a similar glucan chain.. It participates in glycan biosynthesis; glycogen biosynthesis. Functionally, catalyzes the formation of the alpha-1,6-glucosidic linkages in glycogen by scission of a 1,4-alpha-linked oligosaccharide from growing alpha-1,4-glucan chains and the subsequent attachment of the oligosaccharide to the alpha-1,6 position. The polypeptide is 1,4-alpha-glucan branching enzyme GlgB (Chlamydia trachomatis serovar L2 (strain ATCC VR-902B / DSM 19102 / 434/Bu)).